The following is a 289-amino-acid chain: Ribonuclease HII (289 aa).

Residues 1–55 (MIRDQAKTPGRAKSAAAAKASPAAKGGGNEAAQSAAGKAAAKPAAKPATSKSGKG) are disordered. 2 stretches are compositionally biased toward low complexity: residues 7–24 (KTPG…SPAA) and 31–55 (AAQS…SGKG). The RNase H type-2 domain maps to 76–264 (WPVAGCDEAG…VVAARRKHQP (189 aa)). 3 residues coordinate a divalent metal cation: aspartate 82, glutamate 83, and aspartate 173.

It belongs to the RNase HII family. The cofactor is Mn(2+). Mg(2+) is required as a cofactor.

It is found in the cytoplasm. The catalysed reaction is Endonucleolytic cleavage to 5'-phosphomonoester.. In terms of biological role, endonuclease that specifically degrades the RNA of RNA-DNA hybrids. The sequence is that of Ribonuclease HII from Bradyrhizobium sp. (strain BTAi1 / ATCC BAA-1182).